Reading from the N-terminus, the 232-residue chain is MKKVLFYVLPFAFFGCSATVDPQISMKPPAYVEELAPKQSNNVESAPGSLFGKGDNPLFSDKKAMNVNDLVTVVIQESTTQSTQANKATSRTNTSNLGGGALTGSSGVVANALNKVNAYSNIGFQTNSSNKYTGTGSQSRNESFNTTISTRVIKILSNGNYFIEGSRELLINGEKQIIQLSGVIRPYDIGQDNTIDSKYIADAKILYKTEGEVDRSTRKPWGSKVIEAIWPF.

A signal peptide spans 1 to 15; the sequence is MKKVLFYVLPFAFFG. C16 carries N-palmitoyl cysteine lipidation. Residue C16 is the site of S-diacylglycerol cysteine attachment.

This sequence belongs to the FlgH family. The basal body constitutes a major portion of the flagellar organelle and consists of four rings (L,P,S, and M) mounted on a central rod.

It localises to the cell outer membrane. It is found in the bacterial flagellum basal body. Its function is as follows. Assembles around the rod to form the L-ring and probably protects the motor/basal body from shearing forces during rotation. This Campylobacter jejuni subsp. jejuni serotype O:23/36 (strain 81-176) protein is Flagellar L-ring protein.